The sequence spans 153 residues: Transcriptional repressor NrdR (153 aa).

Residues 3 to 34 fold into a zinc finger; it reads CPFCNHLHDKVVDSRESKEGDAIRRRRECLEC. Residues 49–139 form the ATP-cone domain; sequence YMVVKKDGRR…VYRDFQDEQA (91 aa).

It belongs to the NrdR family. The cofactor is Zn(2+).

Negatively regulates transcription of bacterial ribonucleotide reductase nrd genes and operons by binding to NrdR-boxes. This is Transcriptional repressor NrdR from Solibacter usitatus (strain Ellin6076).